The chain runs to 76 residues: MKNILFRINELSKKEKVSGLTVDEKQEQQMLRQNYTQTFRGSLDSILLNTKIVDQNGHNVTPAALQDAQIRLKLSK.

The protein belongs to the UPF0291 family.

It is found in the cytoplasm. This Bacillus cereus (strain ATCC 10987 / NRS 248) protein is UPF0291 protein BCE_1981.